Reading from the N-terminus, the 180-residue chain is Adenine phosphoribosyltransferase (180 aa).

Residue serine 2 is modified to N-acetylserine. Residues serine 4, serine 15, and serine 30 each carry the phosphoserine modification. Tyrosine 60 is modified (phosphotyrosine). Serine 66 is modified (phosphoserine). An N6-acetyllysine modification is found at lysine 114. A Phosphothreonine modification is found at threonine 135.

This sequence belongs to the purine/pyrimidine phosphoribosyltransferase family. As to quaternary structure, homodimer.

The protein localises to the cytoplasm. It catalyses the reaction AMP + diphosphate = 5-phospho-alpha-D-ribose 1-diphosphate + adenine. It functions in the pathway purine metabolism; AMP biosynthesis via salvage pathway; AMP from adenine: step 1/1. Catalyzes a salvage reaction resulting in the formation of AMP, that is energically less costly than de novo synthesis. This chain is Adenine phosphoribosyltransferase, found in Rattus norvegicus (Rat).